The sequence spans 876 residues: Phosphoenolpyruvate carboxylase (876 aa).

Catalysis depends on residues His138 and Lys543.

It belongs to the PEPCase type 1 family. It depends on Mg(2+) as a cofactor.

It catalyses the reaction oxaloacetate + phosphate = phosphoenolpyruvate + hydrogencarbonate. Forms oxaloacetate, a four-carbon dicarboxylic acid source for the tricarboxylic acid cycle. This Pseudomonas fluorescens (strain ATCC BAA-477 / NRRL B-23932 / Pf-5) protein is Phosphoenolpyruvate carboxylase.